Consider the following 346-residue polypeptide: Tetraacyldisaccharide 4'-kinase (346 aa).

An ATP-binding site is contributed by 54–61 (TVGGAGKT).

Belongs to the LpxK family.

It catalyses the reaction a lipid A disaccharide + ATP = a lipid IVA + ADP + H(+). It participates in glycolipid biosynthesis; lipid IV(A) biosynthesis; lipid IV(A) from (3R)-3-hydroxytetradecanoyl-[acyl-carrier-protein] and UDP-N-acetyl-alpha-D-glucosamine: step 6/6. Its function is as follows. Transfers the gamma-phosphate of ATP to the 4'-position of a tetraacyldisaccharide 1-phosphate intermediate (termed DS-1-P) to form tetraacyldisaccharide 1,4'-bis-phosphate (lipid IVA). The polypeptide is Tetraacyldisaccharide 4'-kinase (Rhizobium etli (strain ATCC 51251 / DSM 11541 / JCM 21823 / NBRC 15573 / CFN 42)).